Here is a 276-residue protein sequence, read N- to C-terminus: MSFNLISSYLHLTKPLIIDNKSFPSRLMLGTGKYRSLRNASISIRNSSASIVTVAIRRAYNNKLKGKSSLLDGLDWKKLWILPNTAGCETVEEAIRIAILGREMARRLGQVDNNFVKLEVIADSEYLFPDPYGTLKAAEYLVSNNFTVLPYINPDPVLAKQLEEIGCSAIMPLGSPIGSGQGLQNLLNLQIIINNAKVPIIIDAGIGTASEASQAMEMGASGVLLNTAVAKATNPEYMAEAMKLGVISGRIAYLSGRISKQDKAIASSPSEGIFIK.

K117 functions as the Schiff-base intermediate with DXP in the catalytic mechanism. Residues G178, 204–205 (AG), and 226–227 (NT) contribute to the 1-deoxy-D-xylulose 5-phosphate site.

This sequence belongs to the ThiG family. As to quaternary structure, homotetramer. Forms heterodimers with either ThiH or ThiS.

The protein localises to the plastid. It localises to the chloroplast. It catalyses the reaction [ThiS sulfur-carrier protein]-C-terminal-Gly-aminoethanethioate + 2-iminoacetate + 1-deoxy-D-xylulose 5-phosphate = [ThiS sulfur-carrier protein]-C-terminal Gly-Gly + 2-[(2R,5Z)-2-carboxy-4-methylthiazol-5(2H)-ylidene]ethyl phosphate + 2 H2O + H(+). The protein operates within cofactor biosynthesis; thiamine diphosphate biosynthesis. Functionally, catalyzes the rearrangement of 1-deoxy-D-xylulose 5-phosphate (DXP) to produce the thiazole phosphate moiety of thiamine. Sulfur is provided by the thiocarboxylate moiety of the carrier protein ThiS. In vitro, sulfur can be provided by H(2)S. This chain is Thiazole synthase, found in Gracilaria tenuistipitata var. liui (Red alga).